Here is a 300-residue protein sequence, read N- to C-terminus: Mitochondrial tricarboxylate transporter 1 (300 aa).

Solcar repeat units follow at residues Val8–Met98, Leu107–Trp197, and Ile209–Leu294. 6 consecutive transmembrane segments (helical) span residues Ser11 to Ile31, Pro67 to Val87, Leu114 to Ile134, Gly172 to Tyr191, Leu208 to Gly228, and Leu277 to Gly297.

This sequence belongs to the mitochondrial carrier (TC 2.A.29) family.

The protein localises to the mitochondrion membrane. Mitochondrial tricarboxylate transporter; part of the gene cluster that mediates the biosynthesis of itaconic acid and 2-hydroxyparaconate. Cis-aconitate is secreted by the mitochondrial tricarboxylate transporter MTT1. In the cytosol cis-aconitate is converted into trans-aconitate via isomerization by the aconitate-delta-isomerase ADI1. Decarboxylation of trans-aconitate by the trans-aconitate decarboxylase TAD1 then leads then to the production of itaconic acid. The cytochrome P450 monooxygenase CYP3 further converts itaconate to 2-hydroxyparaconate via oxidation of the double bond, leading to a transient epoxide, which can subsequently be lactonized to produce 2-hydroxyparaconate. Secretion of itaconate and possibly 2-hydroxyparaconate into the medium is mediated by the major facilitator ITP1. The glyoxalase domain-containing protein RDO1 is not involved in the biosynthesis of itaconate and 2-hydroxyparaconate, however, it might play a role in the further conversion of 2-hydroxyparaconate to itatartarate. This chain is Mitochondrial tricarboxylate transporter 1, found in Mycosarcoma maydis (Corn smut fungus).